The following is a 503-amino-acid chain: Maturase K (503 aa).

This sequence belongs to the intron maturase 2 family. MatK subfamily.

The protein localises to the plastid. It is found in the chloroplast. In terms of biological role, usually encoded in the trnK tRNA gene intron. Probably assists in splicing its own and other chloroplast group II introns. The sequence is that of Maturase K from Backhousia myrtifolia (Grey myrtle).